Consider the following 142-residue polypeptide: ATP synthase epsilon chain (142 aa).

This sequence belongs to the ATPase epsilon chain family. In terms of assembly, F-type ATPases have 2 components, CF(1) - the catalytic core - and CF(0) - the membrane proton channel. CF(1) has five subunits: alpha(3), beta(3), gamma(1), delta(1), epsilon(1). CF(0) has three main subunits: a, b and c.

The protein resides in the cell inner membrane. Its function is as follows. Produces ATP from ADP in the presence of a proton gradient across the membrane. The chain is ATP synthase epsilon chain from Pasteurella multocida (strain Pm70).